We begin with the raw amino-acid sequence, 435 residues long: Glutamate-1-semialdehyde 2,1-aminomutase (435 aa).

Position 266 is an N6-(pyridoxal phosphate)lysine (K266).

The protein belongs to the class-III pyridoxal-phosphate-dependent aminotransferase family. HemL subfamily. Homodimer. It depends on pyridoxal 5'-phosphate as a cofactor.

The protein resides in the cytoplasm. The enzyme catalyses (S)-4-amino-5-oxopentanoate = 5-aminolevulinate. It functions in the pathway porphyrin-containing compound metabolism; protoporphyrin-IX biosynthesis; 5-aminolevulinate from L-glutamyl-tRNA(Glu): step 2/2. The sequence is that of Glutamate-1-semialdehyde 2,1-aminomutase from Nitrosomonas europaea (strain ATCC 19718 / CIP 103999 / KCTC 2705 / NBRC 14298).